We begin with the raw amino-acid sequence, 334 residues long: Cell division protein ZipA (334 aa).

The Periplasmic segment spans residues 1 to 2; that stretch reads ME. The helical transmembrane segment at 3 to 23 threads the bilayer; the sequence is LHIIFLILGGLLIVLLAGFSI. Residues 24–334 lie on the Cytoplasmic side of the membrane; that stretch reads YSARREKSRI…DRQAYFARVS (311 aa).

This sequence belongs to the ZipA family. As to quaternary structure, interacts with FtsZ via their C-terminal domains.

It localises to the cell inner membrane. Functionally, essential cell division protein that stabilizes the FtsZ protofilaments by cross-linking them and that serves as a cytoplasmic membrane anchor for the Z ring. Also required for the recruitment to the septal ring of downstream cell division proteins. This is Cell division protein ZipA from Haemophilus ducreyi (strain 35000HP / ATCC 700724).